Reading from the N-terminus, the 205-residue chain is Cytochrome c biogenesis ATP-binding export protein CcmA (205 aa).

The ABC transporter domain occupies 2–204 (LEVSNLTAIR…SPKLRKIKLG (203 aa)). 34–41 (GRNGTGKT) serves as a coordination point for ATP.

The protein belongs to the ABC transporter superfamily. CcmA exporter (TC 3.A.1.107) family. In terms of assembly, the complex is composed of two ATP-binding proteins (CcmA) and two transmembrane proteins (CcmB).

The protein resides in the cell inner membrane. The catalysed reaction is heme b(in) + ATP + H2O = heme b(out) + ADP + phosphate + H(+). Part of the ABC transporter complex CcmAB involved in the biogenesis of c-type cytochromes; once thought to export heme, this seems not to be the case, but its exact role is uncertain. Responsible for energy coupling to the transport system. The chain is Cytochrome c biogenesis ATP-binding export protein CcmA from Vibrio vulnificus (strain CMCP6).